Here is a 123-residue protein sequence, read N- to C-terminus: MPTIKQLIRNTRQPIRNVTKSPALRGCPQRRGTCTRVYTITPKKPNSALRKVARVRLTSGFEITAYIPGIGHNLQEHSVVLVRGGRVKDLPGVRYHIVRGTLDAVGVKDRQQGRSKYGVKKPK.

This sequence belongs to the universal ribosomal protein uS12 family. In terms of assembly, part of the 30S ribosomal subunit.

Its subcellular location is the plastid. The protein resides in the chloroplast. With S4 and S5 plays an important role in translational accuracy. Located at the interface of the 30S and 50S subunits. The polypeptide is Small ribosomal subunit protein uS12cz/uS12cy (rps12-A) (Cucumis sativus (Cucumber)).